The primary structure comprises 305 residues: Foldase protein PrsA (305 aa).

Residues 1-19 (MKKWFIALAGLLLTVTLAG) form the signal peptide. Residue C20 is the site of N-palmitoyl cysteine attachment. Residue C20 is the site of S-diacylglycerol cysteine attachment. In terms of domain architecture, PpiC spans 136-235 (EPEVSVAHIL…YGYHVILMLK (100 aa)).

It belongs to the PrsA family.

The protein resides in the cell membrane. The enzyme catalyses [protein]-peptidylproline (omega=180) = [protein]-peptidylproline (omega=0). Functionally, plays a major role in protein secretion by helping the post-translocational extracellular folding of several secreted proteins. The polypeptide is Foldase protein PrsA (Levilactobacillus brevis (strain ATCC 367 / BCRC 12310 / CIP 105137 / JCM 1170 / LMG 11437 / NCIMB 947 / NCTC 947) (Lactobacillus brevis)).